Here is a 138-residue protein sequence, read N- to C-terminus: uncharacterized protein (138 aa).

Ser-110 bears the Phosphoserine mark.

It localises to the cytoplasm. It is found in the nucleus. This is an uncharacterized protein from Schizosaccharomyces pombe (strain 972 / ATCC 24843) (Fission yeast).